Here is a 282-residue protein sequence, read N- to C-terminus: Undecaprenyl-diphosphatase (282 aa).

Helical transmembrane passes span 2 to 22 (FDFI…FLPV), 47 to 67 (FTAV…IQLY), 90 to 110 (WIKV…LNNF), 115 to 135 (LLNP…FIVI), 152 to 172 (ITFK…VPGT), 190 to 210 (FVAA…VTIL), 225 to 245 (AQLF…LFAI), and 259 to 279 (IFGW…IAGL).

The protein belongs to the UppP family.

It localises to the cell membrane. The catalysed reaction is di-trans,octa-cis-undecaprenyl diphosphate + H2O = di-trans,octa-cis-undecaprenyl phosphate + phosphate + H(+). Its function is as follows. Catalyzes the dephosphorylation of undecaprenyl diphosphate (UPP). Confers resistance to bacitracin. The chain is Undecaprenyl-diphosphatase from Leuconostoc citreum (strain KM20).